Consider the following 412-residue polypeptide: Sterol-4-alpha-carboxylate 3-dehydrogenase erg26, decarboxylating (412 aa).

NADP(+)-binding positions include G17–G23, D89–I90, and T111–T113. Substrate is bound by residues S158 and Y188. NADP(+)-binding positions include Y188, K192, and P217 to I220. The active-site Proton donor is K192.

It belongs to the 3-beta-HSD family. In terms of assembly, heterotetramer of erg25, erg26, erg27 and erg28. Erg28 acts as a scaffold to tether erg27 and other 4,4-demethylation-related enzymes, forming a demethylation enzyme complex, in the endoplasmic reticulum.

Its subcellular location is the endoplasmic reticulum membrane. The protein operates within steroid metabolism; ergosterol biosynthesis. Functionally, sterol-C4-methyl oxidase; part of the third module of ergosterol biosynthesis pathway that includes the late steps of the pathway. Erg26 is a catalytic component of the C-4 demethylation complex that catalyzes the conversion of 4,4-dimethylfecosterol into fecosterol via 4-methylfecosterol. The third module or late pathway involves the ergosterol synthesis itself through consecutive reactions that mainly occur in the endoplasmic reticulum (ER) membrane. Firstly, the squalene synthase erg9 catalyzes the condensation of 2 farnesyl pyrophosphate moieties to form squalene, which is the precursor of all steroids. Squalene synthase is crucial for balancing the incorporation of farnesyl diphosphate (FPP) into sterol and nonsterol isoprene synthesis. Secondly, squalene is converted into lanosterol by the consecutive action of the squalene epoxidase erg1 and the lanosterol synthase erg7. Then, the delta(24)-sterol C-methyltransferase erg6 methylates lanosterol at C-24 to produce eburicol. Eburicol is the substrate of the sterol 14-alpha demethylase encoded by cyp51A and cyp51B, to yield 4,4,24-trimethyl ergosta-8,14,24(28)-trienol. The C-14 reductase erg24 then reduces the C14=C15 double bond which leads to 4,4-dimethylfecosterol. A sequence of further demethylations at C-4, involving the C-4 demethylation complex containing the C-4 methylsterol oxidases erg25A or erg25B, the sterol-4-alpha-carboxylate 3-dehydrogenase erg26 and the 3-keto-steroid reductase erg27, leads to the production of fecosterol via 4-methylfecosterol. The C-8 sterol isomerase erg2 then catalyzes the reaction which results in unsaturation at C-7 in the B ring of sterols and thus converts fecosterol to episterol. The sterol-C5-desaturase erg3B then catalyzes the introduction of a C-5 double bond in the B ring to produce 5-dehydroepisterol. The 2 other sterol-C5-desaturases, erg3A and erg3C, seem to be less important in ergosterol biosynthesis. The C-22 sterol desaturase erg5 further converts 5-dehydroepisterol into ergosta-5,7,22,24(28)-tetraen-3beta-ol by forming the C-22(23) double bond in the sterol side chain. Finally, ergosta-5,7,22,24(28)-tetraen-3beta-ol is substrate of the C-24(28) sterol reductases erg4A and erg4B to produce ergosterol. Possible alternative sterol biosynthetic pathways might exist from fecosterol to ergosterol, depending on the activities of the erg3 isoforms. In Aspergillus fumigatus (strain ATCC MYA-4609 / CBS 101355 / FGSC A1100 / Af293) (Neosartorya fumigata), this protein is Sterol-4-alpha-carboxylate 3-dehydrogenase erg26, decarboxylating.